The following is a 22-amino-acid chain: Conantokin-Oc (22 aa).

A disordered region spans residues 1–22 (GEEERKAMAELEAKKAQEALKA). Residues E3, E4, E10, and E18 each carry the 4-carboxyglutamate modification.

Expressed by the venom duct.

It is found in the secreted. Its function is as follows. Conantokins inhibit N-methyl-D-aspartate (NMDA) receptors. The polypeptide is Conantokin-Oc (Conus ochroleucus (Perfect cone)).